A 567-amino-acid chain; its full sequence is Hexose transporter HXT9 (567 aa).

Over residues 1-16 (MSGVNNTSANDLSTTE) the composition is skewed to polar residues. The interval 1–45 (MSGVNNTSANDLSTTESNSNSVANAPSVKTEHNDSKNSLNLDATE) is disordered. Residues 1–56 (MSGVNNTSANDLSTTESNSNSVANAPSVKTEHNDSKNSLNLDATEPPIDLPQKPLS) are Cytoplasmic-facing. Over residues 17-28 (SNSNSVANAPSV) the composition is skewed to low complexity. The helical transmembrane segment at 57 to 77 (AYTTVAILCLMIAFGGFIFGW) threads the bilayer. Topologically, residues 78-112 (DTGTISGFVNLSDFIRRFGQKNDKGTYYLSKVRMG) are extracellular. A glycan (N-linked (GlcNAc...) asparagine) is linked at Asn87. A helical transmembrane segment spans residues 113–133 (LIVSIFNIGCAIGGIVLSKVG). The Cytoplasmic portion of the chain corresponds to 134–139 (DIYGRR). The helical transmembrane segment at 140-160 (IGLITVTAIYVVGILIQITSI) threads the bilayer. Residues 161–170 (NKWYQYFIGR) lie on the Extracellular side of the membrane. Residues 171–191 (IISGLGVGGIAVLSPMLISEV) form a helical membrane-spanning segment. The Cytoplasmic segment spans residues 192–197 (APKQIR). A helical membrane pass occupies residues 198–218 (GTLVQLYQLMCTMGIFLGYCT). The Extracellular portion of the chain corresponds to 219-232 (NYGTKNYHNATQWR). Asn227 carries N-linked (GlcNAc...) asparagine glycosylation. Residues 233–253 (VGLGLCFAWTTFMVSGMMFVP) form a helical membrane-spanning segment. Over 254–336 (ESPRYLIEVG…IQSLQQLTGD (83 aa)) the chain is Cytoplasmic. Residues 337–353 (NYFFYYGTTIFKSVGLK) form a helical membrane-spanning segment. Residues 354-359 (DSFQTS) are Extracellular-facing. Residues 360 to 377 (IIIGVVNFFSSFIAVYTI) form a helical membrane-spanning segment. The Cytoplasmic portion of the chain corresponds to 378-384 (ERFGRRT). The chain crosses the membrane as a helical span at residues 385–405 (CLLWGAASMLCCFAVFASVGV). Topologically, residues 406 to 429 (TKLWPQGSSHQDITSQGAGNCMIV) are extracellular. A helical membrane pass occupies residues 430–450 (FTMFFIFSFATTWAGGCYVIV). The Cytoplasmic segment spans residues 451–467 (SETFPLRVKSRGMAIAT). A helical transmembrane segment spans residues 468 to 488 (AANWMWGFLISFFTPFITGAI). A topological domain (extracellular) is located at residue Asn489. A helical membrane pass occupies residues 490–510 (FYYGYVFLGCLVFAYFYVFFF). Over 511–567 (VPETKGLTLEEVNTMWLEGVPAWKSASWVPPERRTADYDADAIDHDDRPIYKRFFSS) the chain is Cytoplasmic.

It belongs to the major facilitator superfamily. Sugar transporter (TC 2.A.1.1) family.

The protein localises to the membrane. Functionally, probable glucose transporter. The polypeptide is Hexose transporter HXT9 (HXT9) (Saccharomyces cerevisiae (strain ATCC 204508 / S288c) (Baker's yeast)).